A 395-amino-acid polypeptide reads, in one-letter code: Digeranylgeranylglycerophospholipid reductase (395 aa).

Residues Ala-15, Asp-34, Cys-45, Ala-46, Gly-48, Arg-97, Ala-121, Asp-276, and Gly-288 each contribute to the FAD site. Residues Arg-329 and Gly-365 each contribute to the a 2,3-bis-O-(geranylgeranyl)-sn-glycerol 1-phospholipid site.

Belongs to the geranylgeranyl reductase family. DGGGPL reductase subfamily. FAD is required as a cofactor.

It carries out the reaction a 2,3-bis-O-phytanyl-sn-glycerol 1-phospholipid + 8 A = a 2,3-bis-O-(geranylgeranyl)-sn-glycerol 1-phospholipid + 8 AH2. The enzyme catalyses 2,3-bis-O-(phytanyl)-sn-glycerol 1-phosphate + 8 A = 2,3-bis-O-(geranylgeranyl)-sn-glycerol 1-phosphate + 8 AH2. The catalysed reaction is CDP-2,3-bis-O-(geranylgeranyl)-sn-glycerol + 8 AH2 = CDP-2,3-bis-O-(phytanyl)-sn-glycerol + 8 A. It catalyses the reaction archaetidylserine + 8 AH2 = 2,3-bis-O-phytanyl-sn-glycero-3-phospho-L-serine + 8 A. The protein operates within membrane lipid metabolism; glycerophospholipid metabolism. Is involved in the reduction of 2,3-digeranylgeranylglycerophospholipids (unsaturated archaeols) into 2,3-diphytanylglycerophospholipids (saturated archaeols) in the biosynthesis of archaeal membrane lipids. Catalyzes the formation of archaetidic acid (2,3-di-O-phytanyl-sn-glyceryl phosphate) from 2,3-di-O-geranylgeranylglyceryl phosphate (DGGGP) via the hydrogenation of each double bond of the isoprenoid chains. Is also probably able to reduce double bonds of geranyl groups in CDP-2,3-bis-O-(geranylgeranyl)-sn-glycerol and archaetidylserine, thus acting at various stages in the biosynthesis of archaeal membrane lipids. This is Digeranylgeranylglycerophospholipid reductase from Thermococcus gammatolerans (strain DSM 15229 / JCM 11827 / EJ3).